Here is a 306-residue protein sequence, read N- to C-terminus: tRNA pseudouridine synthase B (306 aa).

Residue Asp48 is the Nucleophile of the active site.

Belongs to the pseudouridine synthase TruB family. Type 1 subfamily.

It carries out the reaction uridine(55) in tRNA = pseudouridine(55) in tRNA. In terms of biological role, responsible for synthesis of pseudouridine from uracil-55 in the psi GC loop of transfer RNAs. The polypeptide is tRNA pseudouridine synthase B (Chromobacterium violaceum (strain ATCC 12472 / DSM 30191 / JCM 1249 / CCUG 213 / NBRC 12614 / NCIMB 9131 / NCTC 9757 / MK)).